The primary structure comprises 659 residues: Endoglucanase A (659 aa).

The segment at Met1 to Glu500 is catalytic. Asp101 functions as the Nucleophile in the catalytic mechanism. Positions Asn413–Asn433 are disordered. Active-site residues include His419, Asp457, and Glu466. Positions Gln501–Asp658 constitute a CBM3 domain.

Belongs to the glycosyl hydrolase 9 (cellulase E) family.

The protein localises to the secreted. It catalyses the reaction Endohydrolysis of (1-&gt;4)-beta-D-glucosidic linkages in cellulose, lichenin and cereal beta-D-glucans.. With respect to regulation, strongly inhibited by ZnCl(2) and by EDTA. Functionally, active on carboxymethyl cellulose and carboxymethyl cellulose-RBB but not avicel, xanthan gum, carboxymethyl-curdulan-RBB or carboxymethyl-xylan-RBB. The sequence is that of Endoglucanase A (eglA) from Bacillus pumilus (Bacillus mesentericus).